Consider the following 256-residue polypeptide: Kallikrein-15 (256 aa).

Positions 1 to 16 (MWLLLTLSFLLASTAA) are cleaved as a signal peptide. The propeptide at 17–21 (QDGDK) is activation peptide. The Peptidase S1 domain maps to 22-254 (LLEGDECAPH…YLEWIRETMK (233 aa)). Cys-47 and Cys-63 are disulfide-bonded. Catalysis depends on charge relay system residues His-62 and Asp-106. Disulfide bonds link Cys-138-Cys-215, Cys-180-Cys-194, and Cys-205-Cys-230. A glycan (N-linked (GlcNAc...) asparagine) is linked at Asn-171. Ser-209 functions as the Charge relay system in the catalytic mechanism. A glycan (N-linked (GlcNAc...) asparagine) is linked at Asn-232.

This sequence belongs to the peptidase S1 family. Kallikrein subfamily. Highest expression in the thyroid gland. Also expressed in the prostate, salivary, and adrenal glands and in the colon testis and kidney.

It localises to the secreted. Its function is as follows. Protease whose physiological substrate is not yet known. The protein is Kallikrein-15 (KLK15) of Homo sapiens (Human).